The chain runs to 151 residues: Macrodomain Ter protein (151 aa).

The protein belongs to the MatP family. As to quaternary structure, homodimer.

The protein resides in the cytoplasm. In terms of biological role, required for spatial organization of the terminus region of the chromosome (Ter macrodomain) during the cell cycle. Prevents early segregation of duplicated Ter macrodomains during cell division. Binds specifically to matS, which is a 13 bp signature motif repeated within the Ter macrodomain. The chain is Macrodomain Ter protein from Yersinia pseudotuberculosis serotype IB (strain PB1/+).